Reading from the N-terminus, the 260-residue chain is Snake venom serine protease 2B (260 aa).

A signal peptide spans 1 to 18; sequence MVLIRVLANLLILQLSYA. A propeptide spanning residues 19 to 24 is cleaved from the precursor; sequence QKSSEL. The 227-residue stretch at 25-251 folds into the Peptidase S1 domain; it reads VVGGDECNIN…HLDWIQSIIA (227 aa). Cystine bridges form between cysteine 31–cysteine 165, cysteine 52–cysteine 68, cysteine 102–cysteine 258, cysteine 144–cysteine 212, cysteine 176–cysteine 191, and cysteine 202–cysteine 227. The Charge relay system role is filled by histidine 67. 2 N-linked (GlcNAc...) asparagine glycosylation sites follow: asparagine 101 and asparagine 105. Aspartate 112 acts as the Charge relay system in catalysis. Residues asparagine 123 and asparagine 156 are each glycosylated (N-linked (GlcNAc...) asparagine). Serine 206 (charge relay system) is an active-site residue.

It belongs to the peptidase S1 family. Snake venom subfamily. Monomer. In terms of tissue distribution, expressed by the venom gland.

The protein localises to the secreted. Its function is as follows. Snake venom serine protease that may act in the hemostasis system of the prey. The protein is Snake venom serine protease 2B (TLG2B) of Craspedocephalus gramineus (Bamboo pit viper).